The chain runs to 354 residues: S-adenosylmethionine:tRNA ribosyltransferase-isomerase (354 aa).

The protein belongs to the QueA family. Monomer.

The protein localises to the cytoplasm. It catalyses the reaction 7-aminomethyl-7-carbaguanosine(34) in tRNA + S-adenosyl-L-methionine = epoxyqueuosine(34) in tRNA + adenine + L-methionine + 2 H(+). Its pathway is tRNA modification; tRNA-queuosine biosynthesis. Its function is as follows. Transfers and isomerizes the ribose moiety from AdoMet to the 7-aminomethyl group of 7-deazaguanine (preQ1-tRNA) to give epoxyqueuosine (oQ-tRNA). The sequence is that of S-adenosylmethionine:tRNA ribosyltransferase-isomerase from Dichelobacter nodosus (strain VCS1703A).